We begin with the raw amino-acid sequence, 476 residues long: Probable serine carboxypeptidase CPVL (476 aa).

An N-terminal signal peptide occupies residues 1–22; that stretch reads MVGAMWKVIVSLVLLMPGPCDG. Residues N81 and N132 are each glycosylated (N-linked (GlcNAc...) asparagine). The active site involves S204. N307 and N346 each carry an N-linked (GlcNAc...) asparagine glycan. Residues D388 and H448 contribute to the active site.

This sequence belongs to the peptidase S10 family. Expressed in macrophages but not in other leukocytes. Abundantly expressed in heart and kidney. Also expressed in spleen, leukocytes, and placenta.

Functionally, may be involved in the digestion of phagocytosed particles in the lysosome, participation in an inflammatory protease cascade, and trimming of peptides for antigen presentation. The protein is Probable serine carboxypeptidase CPVL (CPVL) of Homo sapiens (Human).